Reading from the N-terminus, the 633-residue chain is GRAM domain-containing protein 4 (633 aa).

Disordered regions lie at residues 1-46, 72-109, and 182-216; these read MGIA…VRPR, LAES…AGPG, and VLKA…RSQG. Over residues 27–39 the composition is skewed to basic and acidic residues; that stretch reads PWDKGLSGREPPR. Phosphoserine occurs at positions 75 and 79. A compositionally biased stretch (basic and acidic residues) spans 95 to 104; the sequence is SPRDSEELRD. Residues 134-190 adopt a coiled-coil conformation; the sequence is HLEIALLEKHFLQEELRKLREETNSEMLRQELDRERQRRIELEQKMQEVLKARSEEQ. The segment covering 190 to 205 has biased composition (low complexity); the sequence is QPAQPQQPPKGQSQAS. The next 3 membrane-spanning stretches (helical) occupy residues 295–315, 389–409, and 411–431; these read VYMN…LAIL, TTQK…FFPY, and LVGL…DFIF. The GRAM domain maps to 500 to 578; it reads GNFHEIFNLT…MDITDIQKYK (79 aa).

In terms of assembly, interacts with RTN4 (isoform B).

The protein localises to the mitochondrion membrane. The protein resides in the endoplasmic reticulum membrane. Plays a role as a mediator of E2F1-induced apoptosis in the absence of p53/TP53. Inhibits TLR9 response to nucelic acids and regulates TLR9-mediated innate immune response. This Mus musculus (Mouse) protein is GRAM domain-containing protein 4.